Reading from the N-terminus, the 287-residue chain is Bifunctional protein FolD (287 aa).

NADP(+)-binding positions include 166 to 168 (GAS) and Ile-232.

The protein belongs to the tetrahydrofolate dehydrogenase/cyclohydrolase family. In terms of assembly, homodimer.

The catalysed reaction is (6R)-5,10-methylene-5,6,7,8-tetrahydrofolate + NADP(+) = (6R)-5,10-methenyltetrahydrofolate + NADPH. The enzyme catalyses (6R)-5,10-methenyltetrahydrofolate + H2O = (6R)-10-formyltetrahydrofolate + H(+). The protein operates within one-carbon metabolism; tetrahydrofolate interconversion. Its function is as follows. Catalyzes the oxidation of 5,10-methylenetetrahydrofolate to 5,10-methenyltetrahydrofolate and then the hydrolysis of 5,10-methenyltetrahydrofolate to 10-formyltetrahydrofolate. This Buchnera aphidicola subsp. Baizongia pistaciae (strain Bp) protein is Bifunctional protein FolD.